The following is a 706-amino-acid chain: DNA ligase (706 aa).

NAD(+)-binding positions include D47–D51, S96–I97, and E133. K135 acts as the N6-AMP-lysine intermediate in catalysis. R156, E192, K323, and K347 together coordinate NAD(+). Residues C441, C444, C459, and C465 each contribute to the Zn(2+) site. The BRCT domain maps to V624 to E706.

This sequence belongs to the NAD-dependent DNA ligase family. LigA subfamily. Requires Mg(2+) as cofactor. It depends on Mn(2+) as a cofactor.

It catalyses the reaction NAD(+) + (deoxyribonucleotide)n-3'-hydroxyl + 5'-phospho-(deoxyribonucleotide)m = (deoxyribonucleotide)n+m + AMP + beta-nicotinamide D-nucleotide.. DNA ligase that catalyzes the formation of phosphodiester linkages between 5'-phosphoryl and 3'-hydroxyl groups in double-stranded DNA using NAD as a coenzyme and as the energy source for the reaction. It is essential for DNA replication and repair of damaged DNA. The sequence is that of DNA ligase from Polaromonas sp. (strain JS666 / ATCC BAA-500).